The chain runs to 104 residues: Large ribosomal subunit protein bL28 (104 aa).

It belongs to the bacterial ribosomal protein bL28 family.

This chain is Large ribosomal subunit protein bL28, found in Wolbachia sp. subsp. Brugia malayi (strain TRS).